We begin with the raw amino-acid sequence, 231 residues long: Large ribosomal subunit protein uL1 (231 aa).

The protein belongs to the universal ribosomal protein uL1 family. As to quaternary structure, part of the 50S ribosomal subunit.

Functionally, binds directly to 23S rRNA. The L1 stalk is quite mobile in the ribosome, and is involved in E site tRNA release. Its function is as follows. Protein L1 is also a translational repressor protein, it controls the translation of the L11 operon by binding to its mRNA. The chain is Large ribosomal subunit protein uL1 from Ralstonia nicotianae (strain ATCC BAA-1114 / GMI1000) (Ralstonia solanacearum).